Consider the following 320-residue polypeptide: MNHTSDTALLIVNLGTPEAPTAAAVRRYLGEFLSDRRVVSIPPLFWKPLLHMVILPIRGPRSASKYAKVWLQEGSPLSVYTRRIAEGLTQHLPDWRVAWAMRYGAPALTKALDALQAQQVRRIVILPLYPQYSTTTTASVQDVVEAWCKRTPQVQVECIQDYAEDPAWVAAVAASIRRHWQAHGRSEKLMFSFHGLPQRVANNGDPYPQRCQVSASLIAAALNLNESEWVLGYQSRFGTERWLQPYAEPTLWALAESGIRRFDLVCPGFSVDCLETLEEVALGFSETLAARGATMRYIPCLNDDPAHVQALAGLAQRALL.

Fe cation-binding residues include His194 and Glu275.

It belongs to the ferrochelatase family.

It localises to the cytoplasm. The enzyme catalyses heme b + 2 H(+) = protoporphyrin IX + Fe(2+). It participates in porphyrin-containing compound metabolism; protoheme biosynthesis; protoheme from protoporphyrin-IX: step 1/1. Catalyzes the ferrous insertion into protoporphyrin IX. This chain is Ferrochelatase, found in Xylella fastidiosa (strain M12).